The primary structure comprises 529 residues: DNA polymerase lambda (529 aa).

The 96-residue stretch at Asp14–Leu109 folds into the BRCT domain. The disordered stretch occupies residues Pro119–Asp199. Residues Ser153–Ser175 are compositionally biased toward polar residues. Positions Glu182–Ser193 are enriched in low complexity. Residues Asn213 to Tyr227 form a DNA-binding region. Residue His260 is part of the active site. The segment at Gly295–Thr298 is DNA-binding. Residues Arg336, Ser367 to Arg370, and Gly376 to Asp379 contribute to the dCTP site. Positions Arg370–Asp379 are involved in primer binding. Residues Asp377, Asp379, and Asp444 each contribute to the Mn(2+) site. The interval Glu418–Ala459 is DNA-binding. Asn467 lines the dCTP pocket.

It belongs to the DNA polymerase type-X family. As to quaternary structure, interacts with the DNA repair proteins XRCC4 and LIG4. Interacts with HSP90-1. Requires Mn(2+) as cofactor.

Its subcellular location is the nucleus. It carries out the reaction DNA(n) + a 2'-deoxyribonucleoside 5'-triphosphate = DNA(n+1) + diphosphate. Repair polymerase involved in base excision repair (BER) and responsible for repair of lesions that give rise to abasic (AP) sites in DNA. Has both DNA polymerase and terminal transferase activities. Has a 5'-deoxyribose-5-phosphate lyase (dRP lyase) activity. Involved in the repair of transposon-induced DNA double strand breaks (DSBs). Involved in repair of UV-B-mediated DNA damage during seedling development through an excision repair mechanism. Involved the repair of DSBs induced by high salinity and DNA cross-linking agent. Functions via the DNA non-homologous end joining (NHEJ) pathway. This is DNA polymerase lambda from Arabidopsis thaliana (Mouse-ear cress).